The primary structure comprises 483 residues: Rhamnulokinase (483 aa).

11–15 contributes to the ATP binding site; the sequence is ASSGR. Residues glycine 79 and 234-236 contribute to the substrate site; that span reads HDT. The Proton acceptor role is filled by aspartate 235. Position 257 (threonine 257) interacts with ATP. Asparagine 294 contributes to the substrate binding site. Residue glutamine 302 participates in ATP binding. Cysteine 352 and cysteine 369 are joined by a disulfide. Position 401 (glycine 401) interacts with ATP.

It belongs to the rhamnulokinase family. The cofactor is Mg(2+).

It catalyses the reaction L-rhamnulose + ATP = L-rhamnulose 1-phosphate + ADP + H(+). It participates in carbohydrate degradation; L-rhamnose degradation; glycerone phosphate from L-rhamnose: step 2/3. Its function is as follows. Involved in the catabolism of L-rhamnose (6-deoxy-L-mannose). Catalyzes the transfer of the gamma-phosphate group from ATP to the 1-hydroxyl group of L-rhamnulose to yield L-rhamnulose 1-phosphate. This is Rhamnulokinase from Listeria innocua serovar 6a (strain ATCC BAA-680 / CLIP 11262).